The primary structure comprises 153 residues: MNRVTAIISALVICIIVCLSWAVNHYRDNAITYKAQRDKNARELTLANRVITDIQMRQRDVAALDAKYTKELADAKAENDALRDDVAAGRRRLHIKAVCQSVREATTASGVDNAASPRLADTAERDYFTLRERLITMQKQLEGTQKYINEQCR.

Residues 1–3 (MNR) lie on the Cytoplasmic side of the membrane. A helical; Signal-anchor for type II membrane protein membrane pass occupies residues 4–24 (VTAIISALVICIIVCLSWAVN). The Periplasmic segment spans residues 25-153 (HYRDNAITYK…TQKYINEQCR (129 aa)). Residues 65–92 (DAKYTKELADAKAENDALRDDVAAGRRR) adopt a coiled-coil conformation.

This sequence belongs to the Lambdavirus i-spanin family. In terms of assembly, homodimer; disulfide-linked. Interacts (via C-terminus) with the spanin outer lipoprotein subunit (via C-terminus). Part of the spanin complex which spans the entire periplasmic space. The spanin complex is composed of one homodimer of the i-spanin linked by intermolecular disulfide bonds involving two Cys residues and one homodimer of the o-spanin covalently linked by an intermolecular disulfide bond involving one Cys.

Its subcellular location is the host cell inner membrane. Functionally, component of the spanin complex that disrupts the host outer membrane and participates in cell lysis during virus exit. The spanin complex conducts the final step in host lysis by disrupting the outer membrane after holin and endolysin have permeabilized the inner membrane and degraded the host peptidoglycans. Host outer membrane disruption is due to local fusion between the inner and outer membrane performed by the spanin complex. The protein is Spanin, inner membrane subunit (Rz) of Escherichia coli (Bacteriophage 21).